We begin with the raw amino-acid sequence, 449 residues long: uncharacterized protein (449 aa).

A signal peptide spans 1-20; that stretch reads MWTALVLIWIFSLSLSESHA. Topologically, residues 21–400 are extracellular; sequence ASNDPRNFVP…PLTQAVVDKT (380 aa). An N-linked (GlcNAc...) asparagine glycan is attached at Asn-49. 3 disordered regions span residues 72–101, 154–187, and 215–381; these read AHLNSMEVTTEDTSRTDVSEPATSGGAADG, MTAASSTPMTLALPAPTSTSTGRTPSTTATGHPS, and QTVA…PSTQ. Composition is skewed to low complexity over residues 154 to 184 and 215 to 234; these read MTAASSTPMTLALPAPTSTSTGRTPSTTATG and QTVATTANTSSPMSTRPSPS. Polar residues-rich tracts occupy residues 255–279 and 352–367; these read GPISQVSVDQPVVNTTNKSTPMPSN and TPGTDSTGPTPRSSGG. Residues 401–421 form a helical membrane-spanning segment; sequence LLLVVLLLGVTLFITVLVLFA. At 422–449 the chain is on the cytoplasmic side; it reads LQAYESYKKKDYTQVDYLINGMYADSEM.

Highest expression in heart, placenta, liver, pancreas and colon. Also detected in brain, lung, skeletal muscle, kidney, spleen, prostate, testis, ovary and small intestine. Lowest expression in thymus and leukocytes.

The protein resides in the cell membrane. The protein localises to the golgi apparatus. It is found in the trans-Golgi network membrane. This is an uncharacterized protein from Homo sapiens (Human).